A 293-amino-acid chain; its full sequence is Carbapenem-hydrolyzing beta-lactamase KPC (293 aa).

Positions 1–24 (MSLYRRLVLLSCLSWPLAGFSATA) are cleaved as a signal peptide. Ser69 (acyl-ester intermediate) is an active-site residue. Residue Glu167 is the Proton acceptor of the active site. 233 to 235 (KTG) is a binding site for substrate.

This sequence belongs to the class-A beta-lactamase family.

The enzyme catalyses a beta-lactam + H2O = a substituted beta-amino acid. Not inhibited by EDTA, inhibited by clavulanic acid and tazobactam. Functionally, hydrolyzes carbapenems, penicillins, cephalosporins and aztreonam with varying efficiency. This Klebsiella oxytoca protein is Carbapenem-hydrolyzing beta-lactamase KPC (bla).